Consider the following 116-residue polypeptide: UPF0342 protein RBAM_010030 (116 aa).

It belongs to the UPF0342 family.

This Bacillus velezensis (strain DSM 23117 / BGSC 10A6 / LMG 26770 / FZB42) (Bacillus amyloliquefaciens subsp. plantarum) protein is UPF0342 protein RBAM_010030.